Reading from the N-terminus, the 307-residue chain is Lipid droplet-associated hydrolase (307 aa).

Ser-119 serves as the catalytic Nucleophile. A potential amphipathic helix required for binding to lipid droplets region spans residues 157–200; it reads GWVFTKVAMPLYSVFGYIFFSFFNFLPVWLRLMLIQIYFLIFSI. The next 2 helical transmembrane spans lie at 166-186 and 188-208; these read PLYS…PVWL and LMLI…LGTA. Residues Asp-254 and His-283 each act as charge relay system in the active site.

Belongs to the AB hydrolase superfamily. LDAH family. Interacts with the juvenile hormone hydrolase enzymes Jheh1 and Jheh2. Also interacts with Hmu, Cpr, Gp93 and Pvr. Expressed in accessory glands.

It localises to the lipid droplet. The protein localises to the endoplasmic reticulum membrane. It carries out the reaction a cholesterol ester + H2O = cholesterol + a fatty acid + H(+). In terms of biological role, probable serine lipid hydrolase associated with lipid droplets. Appears to lack or have very low cholesterol esterase activity. Appears to lack triglyceride lipase activity. Involved in cholesterol and triglyceride homeostasis; stimulates cellular triglyceride accumulation and cellular cholesterol release. Involved in negatively regulating juvenile hormone (JH) and possibly, insulin signaling activities such as triacylglycerols (TAG) storage, and thereby plays a role in the endocrine regulation of organismal growth and survival. Likely functions by enhancing the activity of the JH hydrolase enzymes Jheh1 and Jheh2. Required for lipid droplet positioning and fat storage. This is Lipid droplet-associated hydrolase from Drosophila melanogaster (Fruit fly).